Reading from the N-terminus, the 352-residue chain is Fe(3+) ions import ATP-binding protein FbpC (352 aa).

The region spanning 5 to 239 (LHIGHLSKSF…PADLDAALFI (235 aa)) is the ABC transporter domain. 37-44 (GASGCGKT) serves as a coordination point for ATP.

The protein belongs to the ABC transporter superfamily. Fe(3+) ion importer (TC 3.A.1.10) family. As to quaternary structure, the complex is composed of two ATP-binding proteins (FbpC), two transmembrane proteins (FbpB) and a solute-binding protein (FbpA).

It is found in the cell inner membrane. The catalysed reaction is Fe(3+)(out) + ATP + H2O = Fe(3+)(in) + ADP + phosphate + H(+). Functionally, part of the ABC transporter complex FbpABC involved in Fe(3+) ions import. Responsible for energy coupling to the transport system. This Neisseria gonorrhoeae (strain ATCC 700825 / FA 1090) protein is Fe(3+) ions import ATP-binding protein FbpC.